Consider the following 939-residue polypeptide: MITHGFYARTRHKHKLKKTFIMLSAGLGLFFYVNQNSFANGENYFKLGSDSKLLTHNSYQNRLFYTLKTGETVADLSKSQDINLSTIWSLNKHLYSSESEMMKAAPGQQIILPLKKLPFEYSALPLLGSAPLVAAGGVAGHTNKLTKMSPDVTKSNMTDDKALNYAAQQAASLGSQLQSRSLNGDYAKDTALGIAGNQASSQLQAWLQHYGTAEVNLQSGNNFDGSSLDFLLPFYDSEKMLAFGQVGARYIDSRFTANLGAGQRFFLPENMLGYNVFIDQDFSGDNTRLGIGGEYWRDYFKSSVNGYFRMSGWHESYNKKDYDERPANGFDIRFNGYLPSYPALGAKLMYEQYYGDNVALFNSDKLQSNPGAATVGVNYTPIPLVTMGIDYRHGTGNENDLLYSMQFRYQFDKPWSQQIEPQYVNELRTLSGSRYDLVQRNNNIILEYKKQDILSLNIPHDINGTERSTQKIQLIVKSKYGLDRIVWDDSALRSQGGQIQHSGSQSAQDYQAILPAYVQGGSNVYKVTARAYDRNGNSSNNVLLTITVLSNGQVVDQVGVTDFTADKTSAKADGTEAITYTATVKKNGVAQANVPVSFNIVSGTAVLSANSANTNGSGKATVTLKSDKPGQVVVSAKTAEMTSALNANAVIFVDQTKASITEIKADKTTAVANGQDAITYTVKVMKGDKPVSNQEVTFTTTLGKLSNSTEKTDTNGYAKVTLTSTTPGKSLVSARVSDVAVDVKAPEVEFFTTLTIDDGNIEIVGTGVKGKLPTVWLQYGQVNLKASGGNGKYTWRSANPAIASVDASSGQVTLKEKGTTTISVISSDNQTATYTIATPNSLIVPNMSKRVTYNDAVNTCKNFGGKLPSSQNELENVFKAWGAANKYEYYKSSQTIISWVQQTAQDAKSGVASTYDLVKQNPLNNIKASESNAYATCVK.

The first 41 residues, 1-41 (MITHGFYARTRHKHKLKKTFIMLSAGLGLFFYVNQNSFANG), serve as a signal peptide directing secretion. Positions 40–153 (NGENYFKLGS…KLTKMSPDVT (114 aa)) are peptidoglycan-binding. The sufficient for homodimerization stretch occupies residues 40 to 153 (NGENYFKLGS…KLTKMSPDVT (114 aa)). Positions 40–212 (NGENYFKLGS…LQAWLQHYGT (173 aa)) are required for periplasmic localization. Residues 63–112 (LFYTLKTGETVADLSKSQDINLSTIWSLNKHLYSSESEMMKAAPGQQIIL) form the LysM domain. The tract at residues 189–430 (DTALGIAGNQ…PQYVNELRTL (242 aa)) is inverse autotransporter. The signature sequence for beta-barrel assembly machinery (BAM), which recognizes the unfolded beta-barrel in the periplasm stretch occupies residues 402-411 (LYSMQFRYQF). Big-1 domains lie at 560–653 (VTDF…VIFV) and 660–751 (ITEI…VEFF). Residues 750-939 (FFTTLTIDDG…ESNAYATCVK (190 aa)) form a required and sufficient for interaction with intimin receptor Tir region. A C-type lectin domain region spans residues 842 to 939 (LIVPNMSKRV…ESNAYATCVK (98 aa)). Residues 842–939 (LIVPNMSKRV…ESNAYATCVK (98 aa)) are intimin receptor Tir-binding. An intrachain disulfide couples cysteine 860 to cysteine 937.

This sequence belongs to the intimin/invasin family. As to quaternary structure, homodimer. Interacts with Tir.

Its subcellular location is the cell outer membrane. An inverse autotransporter. Adhesin, which mediates attachment to the human intestine epithelial cells. Necessary for the production of attaching and effacing lesions on infected human tissue culture cells. Anchored to the outer membrane by binding to peptidoglycan (PGN) via its periplasmic domain, thus helping in receptor interactions during host invasion. PGN-binding may also aid in resisting mechanical and chemical stress during transit of the bacterium through the gastrointestinal tract of the host. Periplasmic domain binds purified E.coli PGN sacculi under acidic conditions in vitro and in vivo, but does not bind to chitin. Periplasmic domain binds PGN sacculi with an apparent dissociation constant (Kd) of 0.8 uM. No binding to PGN in vitro at normal physiological pH 7.4. The protein is Intimin of Escherichia coli O127:H6 (strain E2348/69 / EPEC).